Here is a 567-residue protein sequence, read N- to C-terminus: Geranylgeranyl transferase type-2 subunit alpha (567 aa).

PFTA repeat units lie at residues 44–78 (LDES…HLET), 88–122 (LVKA…RLPE), 124–158 (NWAR…QAAV), 159–193 (APAE…QLHP), 207–241 (VLLK…RAEP), and 363–397 (VLQS…ALDP). S98 is subject to Phosphoserine. LRR repeat units follow at residues 442-463 (DVRV…EQLL), 464-486 (LVTH…AALR), 487-508 (CLEV…ANLP), 509-530 (RLQE…QPLV), and 534-555 (RLVL…QERL).

This sequence belongs to the protein prenyltransferase subunit alpha family. In terms of assembly, heterotrimer composed of RABGGTA, RABGGTB and CHM; within this trimer, RABGGTA and RABGGTB form the catalytic component B, while CHM (component A) mediates peptide substrate binding. The Rab GGTase dimer (RGGT) interacts with CHM (component A) prior to Rab protein binding; the association is stabilized by geranylgeranyl pyrophosphate (GGpp). The CHM:RGGT:Rab complex is destabilized by GGpp. Interacts with non-phosphorylated form of RAB8A; phosphorylation of RAB8A at 'Thr-72' disrupts this interaction. In terms of tissue distribution, most abundant in the heart, brain, spleen and liver. Less in the lung, muscle, kidney and testis; in these tissues less abundant than the beta subunit.

It carries out the reaction geranylgeranyl diphosphate + L-cysteinyl-[protein] = S-geranylgeranyl-L-cysteinyl-[protein] + diphosphate. Its activity is regulated as follows. The enzymatic reaction requires the aid of a Rab escort protein (also called component A), such as CHM. In terms of biological role, catalyzes the transfer of a geranylgeranyl moiety from geranylgeranyl diphosphate to both cysteines of Rab proteins with the C-terminal sequence -XXCC, -XCXC and -CCXX, such as RAB1A, RAB3A, RAB5A and RAB7A. This is Geranylgeranyl transferase type-2 subunit alpha (Rabggta) from Rattus norvegicus (Rat).